Here is a 275-residue protein sequence, read N- to C-terminus: NH(3)-dependent NAD(+) synthetase (275 aa).

46-53 (GISGGQDS) is an ATP binding site. Asp-52 contributes to the Mg(2+) binding site. Arg-140 is a deamido-NAD(+) binding site. An ATP-binding site is contributed by Thr-160. Glu-165 contributes to the Mg(2+) binding site. The deamido-NAD(+) site is built by Lys-173 and Asp-180. Lys-189 and Thr-211 together coordinate ATP. Residue 260–261 (HK) coordinates deamido-NAD(+).

This sequence belongs to the NAD synthetase family. As to quaternary structure, homodimer.

It carries out the reaction deamido-NAD(+) + NH4(+) + ATP = AMP + diphosphate + NAD(+) + H(+). It participates in cofactor biosynthesis; NAD(+) biosynthesis; NAD(+) from deamido-NAD(+) (ammonia route): step 1/1. Functionally, catalyzes the ATP-dependent amidation of deamido-NAD to form NAD. Uses ammonia as a nitrogen source. This is NH(3)-dependent NAD(+) synthetase from Salmonella heidelberg (strain SL476).